The primary structure comprises 229 residues: MKQVRLLPSAAVRAACALAAAALAGCAQIPREPIVQQPMTAQPPLPVSMQAPGSIFNPGYAGRPLFEDQRPRNIGDILTIVIAENINATKSSGANTNRQGNTDFNVPTAGFLGGLFSKANLSAAGTNKFAATGGASAANTFNGTITVTVTNVLPNGNLVVSGEKQMLINQGNEFVRFSGVVNPNTISGSNSVYSTQVADARIEYSAKGYINEAETMGWLQRFFLNIAPW.

Positions 1 to 25 are cleaved as a signal peptide; the sequence is MKQVRLLPSAAVRAACALAAAALAG. The N-palmitoyl cysteine moiety is linked to residue cysteine 26. Residue cysteine 26 is the site of S-diacylglycerol cysteine attachment.

Belongs to the FlgH family. As to quaternary structure, the basal body constitutes a major portion of the flagellar organelle and consists of four rings (L,P,S, and M) mounted on a central rod.

It localises to the cell outer membrane. It is found in the bacterial flagellum basal body. Functionally, assembles around the rod to form the L-ring and probably protects the motor/basal body from shearing forces during rotation. The chain is Flagellar L-ring protein from Burkholderia multivorans (strain ATCC 17616 / 249).